The primary structure comprises 410 residues: Tryptophan synthase beta chain (410 aa).

K100 carries the N6-(pyridoxal phosphate)lysine modification.

It belongs to the TrpB family. As to quaternary structure, tetramer of two alpha and two beta chains. The cofactor is pyridoxal 5'-phosphate.

The enzyme catalyses (1S,2R)-1-C-(indol-3-yl)glycerol 3-phosphate + L-serine = D-glyceraldehyde 3-phosphate + L-tryptophan + H2O. The protein operates within amino-acid biosynthesis; L-tryptophan biosynthesis; L-tryptophan from chorismate: step 5/5. Its function is as follows. The beta subunit is responsible for the synthesis of L-tryptophan from indole and L-serine. This is Tryptophan synthase beta chain from Pyrobaculum aerophilum (strain ATCC 51768 / DSM 7523 / JCM 9630 / CIP 104966 / NBRC 100827 / IM2).